Here is a 151-residue protein sequence, read N- to C-terminus: Myosin light polypeptide 6 (151 aa).

N-acetylcysteine is present on Cys2. The 36-residue stretch at 7–42 folds into the EF-hand 1 domain; that stretch reads DQTAEFKEAFQLFDRTGDGKILYSQCGDVMRALGQN. Phosphoserine is present on Ser57. An N6-acetyllysine modification is found at Lys81. The region spanning 84 to 119 is the EF-hand 2 domain; it reads GTYEDYVEGLRVFDKEGNGTVMGAEIRHVLVTLGEK.

In terms of assembly, myosin is a hexamer of 2 heavy chains and 4 light chains. Interacts with SPATA6.

Regulatory light chain of myosin. Does not bind calcium. The protein is Myosin light polypeptide 6 (MYL6) of Bos taurus (Bovine).